We begin with the raw amino-acid sequence, 429 residues long: MATQQRPFHLVVFGASGFTGQFVTEEVAREQVSPERTSHLPWAVAGRSREKLLRVLERAAMKLGRPTLSSEVGIIICDITNPASLDEMAKQATVVLNCVGPYRFYGEPVIKACIENGTSCIDISGEPQFLELMYWKYHEKAAEKGVYIIGSSGFDSIPADLGVIYTRNKMNGTLTAVESFLTISSGPEGLCVHDGTWKSAVYGFGDKSNLKKLRNESDMKPVPIVGPKLKRRWPISYCRELNSYSIPFLGADVSVVKRTQRYLHENLEQSPVQYAAYINVGGITSVIKLMFAGLFFLFFVRFGIGRQLLIKFTWLFSFGYFSKQGPTQKQIDASSFTMTFFGQGFSQGVSPVKNKPNIRICTQVKGPEAGYVSTSIAMVQAAMILLNDASDLPKAGGVFTPGAAFSRTKLIDRLNEHGIEFSVISSTEV.

Position 2 is an N-acetylalanine (alanine 2). Serine 217 is modified (phosphoserine).

The protein belongs to the saccharopine dehydrogenase family.

The protein is Saccharopine dehydrogenase-like oxidoreductase (SCCPDH) of Bos taurus (Bovine).